Reading from the N-terminus, the 183-residue chain is Holliday junction branch migration complex subunit RuvA (183 aa).

The segment at 1 to 63 (MIVGLIGVVE…EDAHLLYGFL (63 aa)) is domain I. The interval 64-139 (EEGEKILFER…FFIQDENRPA (76 aa)) is domain II. A region of interest (flexible linker) is located at residue A139. A domain III region spans residues 139–183 (ARNEVFLALESLGFKSAEINQVLKTLKPNLSIEAAIKEALQQLRS).

Belongs to the RuvA family. Homotetramer. Forms an RuvA(8)-RuvB(12)-Holliday junction (HJ) complex. HJ DNA is sandwiched between 2 RuvA tetramers; dsDNA enters through RuvA and exits via RuvB. An RuvB hexamer assembles on each DNA strand where it exits the tetramer. Each RuvB hexamer is contacted by two RuvA subunits (via domain III) on 2 adjacent RuvB subunits; this complex drives branch migration. In the full resolvosome a probable DNA-RuvA(4)-RuvB(12)-RuvC(2) complex forms which resolves the HJ.

Its subcellular location is the cytoplasm. Functionally, the RuvA-RuvB-RuvC complex processes Holliday junction (HJ) DNA during genetic recombination and DNA repair, while the RuvA-RuvB complex plays an important role in the rescue of blocked DNA replication forks via replication fork reversal (RFR). RuvA specifically binds to HJ cruciform DNA, conferring on it an open structure. The RuvB hexamer acts as an ATP-dependent pump, pulling dsDNA into and through the RuvAB complex. HJ branch migration allows RuvC to scan DNA until it finds its consensus sequence, where it cleaves and resolves the cruciform DNA. In Helicobacter pylori (strain ATCC 700392 / 26695) (Campylobacter pylori), this protein is Holliday junction branch migration complex subunit RuvA.